The following is a 272-amino-acid chain: Exosome complex component MTR3 (272 aa).

The interval 1 to 36 (MPGDHRRIRGPEESQPPQLYAADEEEAPGTRDPTRL) is disordered.

The protein belongs to the RNase PH family. Component of the RNA exosome core complex (Exo-9), composed of EXOSC1, EXOSC2, EXOSC3, EXOSC4, EXOSC5, EXOSC6, EXOSC7, EXOSC8 and EXOSC9; within the complex interacts with EXOSC1, EXOSC7 and EXOSC8. The catalytically inactive Exo-9 may associate with the catalytic subunit EXOSC10/RRP6. Exo-9 may associate with DIS3 to form the nucleolar exosome complex, or DIS3L to form the cytoplasmic exosome complex. Exo-9 is formed by a hexameric base ring consisting of the heterodimers EXOSC4-EXOSC9, EXOSC5-EXOSC8 and EXOSC6-EXOSC7, and a cap ring consisting of EXOSC1, EXOSC2 and EXOSC3. The RNA exosome complex associates with cofactors EXOSC10/RRP6, C1D/RRP47, MPHOSPH6/MPP6 and MTREX/MTR4.

The protein resides in the cytoplasm. It localises to the nucleus. Its subcellular location is the nucleolus. Non-catalytic component of the RNA exosome complex which has 3'-&gt;5' exoribonuclease activity and participates in a multitude of cellular RNA processing and degradation events. In the nucleus, the RNA exosome complex is involved in proper maturation of stable RNA species such as rRNA, snRNA and snoRNA, in the elimination of RNA processing by-products and non-coding 'pervasive' transcripts, such as antisense RNA species and promoter-upstream transcripts (PROMPTs), and of mRNAs with processing defects, thereby limiting or excluding their export to the cytoplasm. The RNA exosome may be involved in Ig class switch recombination (CSR) and/or Ig variable region somatic hypermutation (SHM) by targeting AICDA deamination activity to transcribed dsDNA substrates. In the cytoplasm, the RNA exosome complex is involved in general mRNA turnover and specifically degrades inherently unstable mRNAs containing AU-rich elements (AREs) within their 3' untranslated regions, and in RNA surveillance pathways, preventing translation of aberrant mRNAs. It seems to be involved in degradation of histone mRNA. The catalytic inactive RNA exosome core complex of 9 subunits (Exo-9) is proposed to play a pivotal role in the binding and presentation of RNA for ribonucleolysis, and to serve as a scaffold for the association with catalytic subunits and accessory proteins or complexes. The chain is Exosome complex component MTR3 (EXOSC6) from Homo sapiens (Human).